We begin with the raw amino-acid sequence, 419 residues long: Cell division protein FtsZ (419 aa).

GTP contacts are provided by residues 22–26 (GGGGN), 109–111 (GSG), glutamate 140, arginine 144, and aspartate 188. Residues 397 to 419 (ERFEAPISQDEDELDTPPFFKNR) are disordered.

This sequence belongs to the FtsZ family. As to quaternary structure, homodimer. Polymerizes to form a dynamic ring structure in a strictly GTP-dependent manner. Interacts directly with several other division proteins. Interacts with CcrZ; the interaction is direct.

Its subcellular location is the cytoplasm. Functionally, essential cell division protein that forms a contractile ring structure (Z ring) at the future cell division site. The regulation of the ring assembly controls the timing and the location of cell division. One of the functions of the FtsZ ring is to recruit other cell division proteins to the septum to produce a new cell wall between the dividing cells. Binds GTP and shows GTPase activity. This is Cell division protein FtsZ from Streptococcus pneumoniae serotype 2 (strain D39 / NCTC 7466).